The primary structure comprises 1430 residues: FYVE, RhoGEF and PH domain-containing protein 6 (1430 aa).

Positions 1-36 (MTSAAEIKKPPVAPKPKFVVANNKPAPPPIAPKPDI) are disordered. Residues 15 to 24 (KPKFVVANNK) are compositionally biased toward low complexity. Phosphoserine is present on S231. The tract at residues 330–351 (CVDTPSESTEEPGNSDSSSSCL) is disordered. Positions 334-351 (PSESTEEPGNSDSSSSCL) are enriched in polar residues. S515 is modified (phosphoserine). The tract at residues 516-538 (EELLEKSSYPSSEEKSSEKSLER) is disordered. Positions 527–538 (SEEKSSEKSLER) are enriched in basic and acidic residues. Residues S554, S605, S692, and S721 each carry the phosphoserine modification. Disordered regions lie at residues 695–739 (NYSL…PYKS) and 800–869 (PDGQ…NGMK). Over residues 728–739 (SRESSSQAPYKS) the composition is skewed to polar residues. Over residues 831–847 (PSDEEEIINSSDEDDVS) the composition is skewed to acidic residues. The span at 851-868 (SKGEPDPLEDKQDEDNGM) shows a compositional bias: basic and acidic residues. The 190-residue stretch at 871 to 1060 (KVHHIAKEIM…IEVANHANDT (190 aa)) folds into the DH domain. The PH 1 domain occupies 1089 to 1183 (VFLKEGILMK…WLEAISRAIE (95 aa)). S1197 carries the post-translational modification Phosphoserine. The FYVE-type zinc finger occupies 1222-1281 (DTRATMCMICTSEFTLTWRRHHCRACGKIVCQACSSNKYGLDYLKNQPARVCEHCFQELQ). Zn(2+)-binding residues include C1228, C1231, C1244, C1247, C1252, C1255, C1273, and C1276. Positions 1333 to 1429 (DSSMSGYLYR…WIEAFQEGTI (97 aa)) constitute a PH 2 domain.

It is found in the cytoplasm. The protein localises to the cytoskeleton. Functionally, may activate CDC42, a member of the Ras-like family of Rho- and Rac proteins, by exchanging bound GDP for free GTP. May play a role in regulating the actin cytoskeleton and cell shape. This is FYVE, RhoGEF and PH domain-containing protein 6 (FGD6) from Homo sapiens (Human).